Here is a 160-residue protein sequence, read N- to C-terminus: SsrA-binding protein (160 aa).

Belongs to the SmpB family.

Its subcellular location is the cytoplasm. In terms of biological role, required for rescue of stalled ribosomes mediated by trans-translation. Binds to transfer-messenger RNA (tmRNA), required for stable association of tmRNA with ribosomes. tmRNA and SmpB together mimic tRNA shape, replacing the anticodon stem-loop with SmpB. tmRNA is encoded by the ssrA gene; the 2 termini fold to resemble tRNA(Ala) and it encodes a 'tag peptide', a short internal open reading frame. During trans-translation Ala-aminoacylated tmRNA acts like a tRNA, entering the A-site of stalled ribosomes, displacing the stalled mRNA. The ribosome then switches to translate the ORF on the tmRNA; the nascent peptide is terminated with the 'tag peptide' encoded by the tmRNA and targeted for degradation. The ribosome is freed to recommence translation, which seems to be the essential function of trans-translation. In Cronobacter sakazakii (strain ATCC BAA-894) (Enterobacter sakazakii), this protein is SsrA-binding protein.